A 305-amino-acid polypeptide reads, in one-letter code: Syntaxin-123 (305 aa).

The residue at position 1 (Met-1) is an N-acetylmethionine. The Cytoplasmic portion of the chain corresponds to 1–278 (MNDLISSSFK…KVLQRNNRKW (278 aa)). Residues 46-66 (VKEDMKAVDEIHKRLQDANEE) are a coiled coil. A t-SNARE coiled-coil homology domain is found at 206 to 268 (LSEIQERHDT…MRGTDQLHGA (63 aa)). A helical; Anchor for type IV membrane protein transmembrane segment spans residues 279–299 (ACIATILAIVVVIVILFPILF). Topologically, residues 300-305 (NTLLRP) are vesicular.

It belongs to the syntaxin family. In terms of assembly, part of the t-SNARE complex. Expressed in tips of root hairs.

The protein localises to the membrane. Functionally, vesicle trafficking protein that functions in the secretory pathway. Acts in coordination with SYP132 to mediate tip-focused membrane trafficking for root hair tip growth. Functions in root hair elongation by forming SNARE complexes with VAMP721,VAMP722 or VAMP724. This Arabidopsis thaliana (Mouse-ear cress) protein is Syntaxin-123.